The primary structure comprises 59 residues: Large ribosomal subunit protein bL32 (59 aa).

The segment at 1–59 is disordered; it reads MAVQQNRKSRSRRGMRRSHDALSSAALSIDPTTGEKHRRHHVTPDGFYRGKKVVEVSQD. Positions 7 to 16 are enriched in basic residues; the sequence is RKSRSRRGMR.

Belongs to the bacterial ribosomal protein bL32 family.

The sequence is that of Large ribosomal subunit protein bL32 from Hahella chejuensis (strain KCTC 2396).